The sequence spans 20 residues: DnaJ homolog subfamily C member 1 (20 aa).

Residues 1–20 lie on the Lumenal side of the membrane; sequence WESGDLELFDLVEEVXLNFY. The J domain maps to 18–20; sequence NFY.

Interacts (via SANT 2 domain) with SERPINA3; the interaction delays the formation of the covalent inhibitory complex SERPINA3-chymotrypsin, but does not alter the catalytic activity of SERPINA3. Interacts (via SANT 2 domain) with ITIH4 (via C-terminus); the interaction protects ITIH4 against in vitro cleavage by kallikrein. Interacts (via J domain) with HSPA5. Interacts (via cytosolic domain) with ribosomes.

Its subcellular location is the endoplasmic reticulum membrane. It is found in the nucleus membrane. The protein resides in the microsome membrane. The polypeptide is DnaJ homolog subfamily C member 1 (DNAJC1) (Canis lupus familiaris (Dog)).